The primary structure comprises 397 residues: Tyrosine--tRNA ligase (397 aa).

A 'HIGH' region motif is present at residues 41-50; it reads PTAPDLHLGH. Residues 225–229 carry the 'KMSKS' region motif; that stretch reads KMSKS. Position 228 (Lys228) interacts with ATP. Residues 340–396 form the S4 RNA-binding domain; that stretch reads AFLADSGLAGSRGEAKRLIKQGALSLDGEKLDDPNTPLTAGEYVVRLGKKRFLRLIV.

Belongs to the class-I aminoacyl-tRNA synthetase family. TyrS type 2 subfamily. In terms of assembly, homodimer.

It is found in the cytoplasm. It catalyses the reaction tRNA(Tyr) + L-tyrosine + ATP = L-tyrosyl-tRNA(Tyr) + AMP + diphosphate + H(+). Catalyzes the attachment of tyrosine to tRNA(Tyr) in a two-step reaction: tyrosine is first activated by ATP to form Tyr-AMP and then transferred to the acceptor end of tRNA(Tyr). The chain is Tyrosine--tRNA ligase from Oleidesulfovibrio alaskensis (strain ATCC BAA-1058 / DSM 17464 / G20) (Desulfovibrio alaskensis).